A 194-amino-acid polypeptide reads, in one-letter code: MENTQENPTSQNPTPADETARQAAEAAAPQQEAAANAATDSPVNAEQSALAEAEAKIAELQESFLRAKAETENVRRRAQEDVAKAHKFAIESFAEHLLPVIDSLEAAVAHSSDDLQKVREGVELTLRQLTGALEKGRVVALNPVGEKFDPHRHQAISMVPAEQEPNTVVAVLQKGFVIADRVLRPALVTVAAPK.

Residues 1–14 (MENTQENPTSQNPT) are compositionally biased toward polar residues. The segment at 1 to 50 (MENTQENPTSQNPTPADETARQAAEAAAPQQEAAANAATDSPVNAEQSAL) is disordered. Over residues 21-38 (RQAAEAAAPQQEAAANAA) the composition is skewed to low complexity.

The protein belongs to the GrpE family. As to quaternary structure, homodimer.

It is found in the cytoplasm. Its function is as follows. Participates actively in the response to hyperosmotic and heat shock by preventing the aggregation of stress-denatured proteins, in association with DnaK and GrpE. It is the nucleotide exchange factor for DnaK and may function as a thermosensor. Unfolded proteins bind initially to DnaJ; upon interaction with the DnaJ-bound protein, DnaK hydrolyzes its bound ATP, resulting in the formation of a stable complex. GrpE releases ADP from DnaK; ATP binding to DnaK triggers the release of the substrate protein, thus completing the reaction cycle. Several rounds of ATP-dependent interactions between DnaJ, DnaK and GrpE are required for fully efficient folding. The sequence is that of Protein GrpE from Paraburkholderia phytofirmans (strain DSM 17436 / LMG 22146 / PsJN) (Burkholderia phytofirmans).